Consider the following 485-residue polypeptide: Glutamyl-tRNA(Gln) amidotransferase subunit A (485 aa).

Active-site charge relay system residues include Lys79 and Ser154. Ser178 acts as the Acyl-ester intermediate in catalysis.

The protein belongs to the amidase family. GatA subfamily. In terms of assembly, heterotrimer of A, B and C subunits.

The catalysed reaction is L-glutamyl-tRNA(Gln) + L-glutamine + ATP + H2O = L-glutaminyl-tRNA(Gln) + L-glutamate + ADP + phosphate + H(+). In terms of biological role, allows the formation of correctly charged Gln-tRNA(Gln) through the transamidation of misacylated Glu-tRNA(Gln) in organisms which lack glutaminyl-tRNA synthetase. The reaction takes place in the presence of glutamine and ATP through an activated gamma-phospho-Glu-tRNA(Gln). This Bacillus pumilus (strain SAFR-032) protein is Glutamyl-tRNA(Gln) amidotransferase subunit A.